A 485-amino-acid polypeptide reads, in one-letter code: NADH-quinone oxidoreductase subunit N (485 aa).

A run of 14 helical transmembrane segments spans residues 8-28, 35-55, 71-91, 105-125, 127-147, 159-179, 203-223, 235-255, 271-291, 297-317, 326-346, 373-393, 408-430, and 455-475; these read LIAL…MLSI, FLNA…LWFV, GFAM…CTFA, FYLL…ANHL, ALFL…GYAF, YTIL…LVYA, LLAG…LVPF, PAPV…GVVM, VVLG…ALSQ, LLGY…IALQ, VGVY…VVSL, AAVM…LGFI, WWLV…RVAV, and IVVL…QPLI.

This sequence belongs to the complex I subunit 2 family. As to quaternary structure, NDH-1 is composed of 13 different subunits. Subunits NuoA, H, J, K, L, M, N constitute the membrane sector of the complex.

The protein localises to the cell inner membrane. The enzyme catalyses a quinone + NADH + 5 H(+)(in) = a quinol + NAD(+) + 4 H(+)(out). In terms of biological role, NDH-1 shuttles electrons from NADH, via FMN and iron-sulfur (Fe-S) centers, to quinones in the respiratory chain. The immediate electron acceptor for the enzyme in this species is believed to be ubiquinone. Couples the redox reaction to proton translocation (for every two electrons transferred, four hydrogen ions are translocated across the cytoplasmic membrane), and thus conserves the redox energy in a proton gradient. This is NADH-quinone oxidoreductase subunit N from Salmonella typhimurium (strain LT2 / SGSC1412 / ATCC 700720).